A 276-amino-acid polypeptide reads, in one-letter code: 3beta-hydroxysteroid dehydrogenase (276 aa).

NADP(+) contacts are provided by residues 70–71 (DV), Asn97, Tyr162, and Lys166. The active-site Proton acceptor is Tyr162.

This sequence belongs to the short-chain dehydrogenases/reductases (SDR) family.

The catalysed reaction is 3-oxo-5beta-cholan-24-oate + NADPH + H(+) = isolithocholate + NADP(+). It carries out the reaction 12alpha-hydroxy-3-oxo-5beta-cholan-24-oate + NADPH + H(+) = isodeoxycholate + NADP(+). It catalyses the reaction 12alpha-hydroxy-3-oxo-5beta-cholan-24-oate + NADH + H(+) = isodeoxycholate + NAD(+). The enzyme catalyses 7alpha,12alpha-dihydroxy-3-oxo-5beta-cholan-24-oate + NADPH + H(+) = isocholate + NADP(+). The catalysed reaction is 3-oxochenodeoxycholate + NADPH + H(+) = isochenodeoxycholate + NADP(+). In terms of biological role, involved in the modification of secondary bile acids into iso-bile acids (3beta-bile acids) via epimerization of the 3-OH group through a 3-oxo-intermediate. Catalyzes the reduction of 12-alpha-hydroxy-3-oxo-5-beta-cholan-24-oate (3-oxo-DCA) and 3-oxo-5-beta-cholan-24-oate (3-oxo-LCA) to yield isodeoxycholate (isoDCA) and isolithocholate (isoLCA), respectively. Is also able to catalyze the reduction of 3-dehydrocholate (3-oxo-CA or 7alpha,12alpha-dihydroxy-3-oxo-5beta-cholan-24-oate) and 7-alpha-hydroxy-3-oxo-5-beta-cholan-24-oate (3-oxo-CDCA), into isocholate (isoCA) and isochenodeoxycholate (isoCDCA), respectively. Accepts both NADPH and NADH as cosubstrates. The conversion of the abundant bile acid deoxycholate (DCA) into isoDCA by the gut bacterium R.gnavus favors the growth of the keystone commensal genus Bacteroides, since isoDCA is less cytotoxic than its parent compound, DCA; iso-bile acids have thus a potential role in modulating gut community composition. The protein is 3beta-hydroxysteroid dehydrogenase of Mediterraneibacter gnavus (strain ATCC 29149 / DSM 114966 / JCM 6515 / VPI C7-9) (Ruminococcus gnavus).